Reading from the N-terminus, the 220-residue chain is Protein GrpE (220 aa).

Positions 1-22 (MSDEKNKFTDASFENCDLKNPS) are disordered.

This sequence belongs to the GrpE family. In terms of assembly, homodimer.

The protein resides in the cytoplasm. Functionally, participates actively in the response to hyperosmotic and heat shock by preventing the aggregation of stress-denatured proteins, in association with DnaK and GrpE. It is the nucleotide exchange factor for DnaK and may function as a thermosensor. Unfolded proteins bind initially to DnaJ; upon interaction with the DnaJ-bound protein, DnaK hydrolyzes its bound ATP, resulting in the formation of a stable complex. GrpE releases ADP from DnaK; ATP binding to DnaK triggers the release of the substrate protein, thus completing the reaction cycle. Several rounds of ATP-dependent interactions between DnaJ, DnaK and GrpE are required for fully efficient folding. The sequence is that of Protein GrpE from Bartonella henselae (strain ATCC 49882 / DSM 28221 / CCUG 30454 / Houston 1) (Rochalimaea henselae).